The sequence spans 247 residues: ATP synthase subunit a, chloroplastic (247 aa).

The next 5 helical transmembrane spans lie at 38–58 (QVLI…VIAV), 95–115 (VPFI…GALL), 134–154 (INTT…AGLS), 199–219 (LVVV…VMFL), and 220–240 (GLFT…AYIG).

Belongs to the ATPase A chain family. F-type ATPases have 2 components, CF(1) - the catalytic core - and CF(0) - the membrane proton channel. CF(1) has five subunits: alpha(3), beta(3), gamma(1), delta(1), epsilon(1). CF(0) has four main subunits: a, b, b' and c.

It is found in the plastid. The protein resides in the chloroplast thylakoid membrane. Key component of the proton channel; it plays a direct role in the translocation of protons across the membrane. In Hordeum vulgare (Barley), this protein is ATP synthase subunit a, chloroplastic.